A 119-amino-acid chain; its full sequence is Large ribosomal subunit protein bL20 (119 aa).

Belongs to the bacterial ribosomal protein bL20 family.

Binds directly to 23S ribosomal RNA and is necessary for the in vitro assembly process of the 50S ribosomal subunit. It is not involved in the protein synthesizing functions of that subunit. The sequence is that of Large ribosomal subunit protein bL20 from Alkalilimnicola ehrlichii (strain ATCC BAA-1101 / DSM 17681 / MLHE-1).